The sequence spans 120 residues: uncharacterized protein (120 aa).

N-linked (GlcNAc...) asparagine; by host glycosylation is found at N29 and N68. The helical transmembrane segment at 74–94 (IFNGLGFILIVIFIYLLIITL) threads the bilayer.

This sequence belongs to the asfivirus B117L family.

The protein localises to the host membrane. It localises to the virion. This is an uncharacterized protein from Ornithodoros (relapsing fever ticks).